Here is a 405-residue protein sequence, read N- to C-terminus: Tryptophan synthase beta chain (405 aa).

Position 98 is an N6-(pyridoxal phosphate)lysine (Lys-98).

The protein belongs to the TrpB family. Tetramer of two alpha and two beta chains. The cofactor is pyridoxal 5'-phosphate.

It carries out the reaction (1S,2R)-1-C-(indol-3-yl)glycerol 3-phosphate + L-serine = D-glyceraldehyde 3-phosphate + L-tryptophan + H2O. It participates in amino-acid biosynthesis; L-tryptophan biosynthesis; L-tryptophan from chorismate: step 5/5. The beta subunit is responsible for the synthesis of L-tryptophan from indole and L-serine. This chain is Tryptophan synthase beta chain, found in Parvibaculum lavamentivorans (strain DS-1 / DSM 13023 / NCIMB 13966).